Reading from the N-terminus, the 499-residue chain is Glycerol kinase (499 aa).

Threonine 13 is a binding site for ADP. Residues threonine 13, threonine 14, and serine 15 each contribute to the ATP site. Threonine 13 serves as a coordination point for sn-glycerol 3-phosphate. Arginine 17 is a binding site for ADP. Residues arginine 83, glutamate 84, tyrosine 135, and aspartate 244 each coordinate sn-glycerol 3-phosphate. 5 residues coordinate glycerol: arginine 83, glutamate 84, tyrosine 135, aspartate 244, and glutamine 245. Threonine 266 and glycine 309 together coordinate ADP. Positions 266, 309, 313, and 410 each coordinate ATP. ADP is bound by residues glycine 410 and asparagine 414.

This sequence belongs to the FGGY kinase family. Homotetramer and homodimer (in equilibrium).

It carries out the reaction glycerol + ATP = sn-glycerol 3-phosphate + ADP + H(+). It functions in the pathway polyol metabolism; glycerol degradation via glycerol kinase pathway; sn-glycerol 3-phosphate from glycerol: step 1/1. With respect to regulation, activated by phosphorylation and inhibited by fructose 1,6-bisphosphate (FBP). Functionally, key enzyme in the regulation of glycerol uptake and metabolism. Catalyzes the phosphorylation of glycerol to yield sn-glycerol 3-phosphate. The sequence is that of Glycerol kinase from Brevibacillus brevis (strain 47 / JCM 6285 / NBRC 100599).